The following is a 104-amino-acid chain: Thioredoxin (104 aa).

The 103-residue stretch at 2–104 folds into the Thioredoxin domain; the sequence is AIVKVTDSNF…NLAEVIEKHL (103 aa). Cysteine 29 and cysteine 32 are disulfide-bonded.

Belongs to the thioredoxin family.

Its function is as follows. Component of the thioredoxin-thioredoxin reductase system. Participates in various redox reactions through the reversible oxidation of its active center dithiol to a disulfide and catalyzes dithiol-disulfide exchange reactions. The sequence is that of Thioredoxin (trxA) from Staphylococcus saprophyticus subsp. saprophyticus (strain ATCC 15305 / DSM 20229 / NCIMB 8711 / NCTC 7292 / S-41).